A 254-amino-acid polypeptide reads, in one-letter code: Attacin-A (254 aa).

Positions 1–18 are cleaved as a signal peptide; it reads MFTYKLILGLVLVVSASA. The propeptide occupies 19–62; that stretch reads RYLVFEDLEGESYLVPNQAEDEQVLEGEPFYENAVQLASPRVRR.

The protein belongs to the attacin/sarcotoxin-2 family.

The protein localises to the secreted. Hemolymph antibacterial protein. This Trichoplusia ni (Cabbage looper) protein is Attacin-A.